A 97-amino-acid polypeptide reads, in one-letter code: Cytochrome c2 iso-2 (97 aa).

Residues Cys10, Cys13, His14, and Met75 each contribute to the heme c site.

Belongs to the cytochrome c family. In terms of processing, binds 1 heme c group covalently per subunit.

Cytochrome c2 is found mainly in purple, non-sulfur, photosynthetic bacteria where it functions as the electron donor to the oxidized bacteriochlorophyll in the photophosphorylation pathway. However, it may also have a role in the respiratory chain and is found in some non-photosynthetic bacteria. In Magnetospirillum molischianum (Rhodospirillum molischianum), this protein is Cytochrome c2 iso-2.